The following is a 311-amino-acid chain: Formimidoylglutamase (311 aa).

Positions 122, 151, 153, 155, 242, and 244 each coordinate Mn(2+).

It belongs to the arginase family. Homodimer. The cofactor is Mn(2+).

It carries out the reaction N-formimidoyl-L-glutamate + H2O = formamide + L-glutamate. It functions in the pathway amino-acid degradation; L-histidine degradation into L-glutamate; L-glutamate from N-formimidoyl-L-glutamate (hydrolase route): step 1/1. Its function is as follows. Catalyzes the conversion of N-formimidoyl-L-glutamate to L-glutamate and formamide. The protein is Formimidoylglutamase of Pseudomonas aeruginosa (strain ATCC 15692 / DSM 22644 / CIP 104116 / JCM 14847 / LMG 12228 / 1C / PRS 101 / PAO1).